Consider the following 88-residue polypeptide: Small ribosomal subunit protein uS15 (88 aa).

Belongs to the universal ribosomal protein uS15 family. Part of the 30S ribosomal subunit. Forms a bridge to the 50S subunit in the 70S ribosome, contacting the 23S rRNA.

In terms of biological role, one of the primary rRNA binding proteins, it binds directly to 16S rRNA where it helps nucleate assembly of the platform of the 30S subunit by binding and bridging several RNA helices of the 16S rRNA. Functionally, forms an intersubunit bridge (bridge B4) with the 23S rRNA of the 50S subunit in the ribosome. The sequence is that of Small ribosomal subunit protein uS15 from Geobacter metallireducens (strain ATCC 53774 / DSM 7210 / GS-15).